Here is a 391-residue protein sequence, read N- to C-terminus: Elongation factor Tu (391 aa).

One can recognise a tr-type G domain in the interval 10–201 (KPHVNIGTIG…AVDAYIPTPE (192 aa)). A G1 region spans residues 19–26 (GHVDHGKT). A GTP-binding site is contributed by 19–26 (GHVDHGKT). T26 lines the Mg(2+) pocket. Positions 55-59 (GITIS) are G2. The G3 stretch occupies residues 76–79 (DCPG). GTP-binding positions include 76–80 (DCPGH) and 131–134 (NKVD). A G4 region spans residues 131–134 (NKVD). Residues 169-171 (SAL) are G5.

Belongs to the TRAFAC class translation factor GTPase superfamily. Classic translation factor GTPase family. EF-Tu/EF-1A subfamily. Monomer.

It is found in the cytoplasm. The enzyme catalyses GTP + H2O = GDP + phosphate + H(+). In terms of biological role, GTP hydrolase that promotes the GTP-dependent binding of aminoacyl-tRNA to the A-site of ribosomes during protein biosynthesis. The polypeptide is Elongation factor Tu (Rhizobium meliloti (strain 1021) (Ensifer meliloti)).